The primary structure comprises 48 residues: ATP synthase protein 8 (48 aa).

Residues L12 to L32 form a helical membrane-spanning segment.

It belongs to the ATPase protein 8 family. As to quaternary structure, F-type ATPases have 2 components, CF(1) - the catalytic core - and CF(0) - the membrane proton channel.

Its subcellular location is the mitochondrion membrane. Its function is as follows. Mitochondrial membrane ATP synthase (F(1)F(0) ATP synthase or Complex V) produces ATP from ADP in the presence of a proton gradient across the membrane which is generated by electron transport complexes of the respiratory chain. F-type ATPases consist of two structural domains, F(1) - containing the extramembraneous catalytic core and F(0) - containing the membrane proton channel, linked together by a central stalk and a peripheral stalk. During catalysis, ATP synthesis in the catalytic domain of F(1) is coupled via a rotary mechanism of the central stalk subunits to proton translocation. Part of the complex F(0) domain. Minor subunit located with subunit a in the membrane. The protein is ATP synthase protein 8 (ATP8) of Candida parapsilosis (Yeast).